The primary structure comprises 576 residues: DNA primase (576 aa).

The segment at Cys-40–Cys-64 adopts a CHC2-type zinc-finger fold. The 83-residue stretch at Asp-251 to Pro-333 folds into the Toprim domain. 3 residues coordinate Mg(2+): Glu-257, Asp-301, and Asp-303.

The protein belongs to the DnaG primase family. As to quaternary structure, monomer. Interacts with DnaB. It depends on Zn(2+) as a cofactor. Mg(2+) serves as cofactor.

It catalyses the reaction ssDNA + n NTP = ssDNA/pppN(pN)n-1 hybrid + (n-1) diphosphate.. Its function is as follows. RNA polymerase that catalyzes the synthesis of short RNA molecules used as primers for DNA polymerase during DNA replication. This is DNA primase from Legionella pneumophila.